A 360-amino-acid chain; its full sequence is MRVDLFDFDLPEDSVALRPASPRDSARMLVVRPGGEPVLEDRGVLDLPSFLRQGDALVFNDTKVIPAQLEGVRYRGEHISTPVSLTLHMRVAPDRWKAFARPARRLKPGDRVSFGHGGNACLLGSLDAMVEEKGDAGEVTLRFDLSGPSLDEAIMSVGHIPLPPYIASKRADDARDRTDYQTVYAREEGAVAAPTAGLHFTDRLFAMLDEAGIERHFVTLHVGAGTFLPVKADDTDDHVMHEEIGHVDAVTAAKLNAVRERGGRVVCVGTTSLRLVESAAAEDGTIHAWSGATGIFITPGYRFRAAHMLMTNFHLPKSTLFMLVSAFAGLETMRDAYAHAIATGYRFYSYGDSSLLFRKD.

The protein belongs to the QueA family. Monomer.

The protein resides in the cytoplasm. The enzyme catalyses 7-aminomethyl-7-carbaguanosine(34) in tRNA + S-adenosyl-L-methionine = epoxyqueuosine(34) in tRNA + adenine + L-methionine + 2 H(+). It functions in the pathway tRNA modification; tRNA-queuosine biosynthesis. Transfers and isomerizes the ribose moiety from AdoMet to the 7-aminomethyl group of 7-deazaguanine (preQ1-tRNA) to give epoxyqueuosine (oQ-tRNA). The sequence is that of S-adenosylmethionine:tRNA ribosyltransferase-isomerase from Sinorhizobium medicae (strain WSM419) (Ensifer medicae).